A 305-amino-acid chain; its full sequence is Translation initiation factor eIF2B subunit alpha (305 aa).

The protein belongs to the eIF-2B alpha/beta/delta subunits family. Component of the translation initiation factor 2B (eIF2B) complex which is a heterodecamer of two sets of five different subunits: alpha, beta, gamma, delta and epsilon. Subunits alpha, beta and delta comprise a regulatory subcomplex and subunits epsilon and gamma comprise a catalytic subcomplex. Within the complex, the hexameric regulatory complex resides at the center, with the two heterodimeric catalytic subcomplexes bound on opposite sides.

The protein localises to the cytoplasm. Its subcellular location is the cytosol. Its function is as follows. Acts as a component of the translation initiation factor 2B (eIF2B) complex, which catalyzes the exchange of GDP for GTP on eukaryotic initiation factor 2 (eIF2) gamma subunit. Its guanine nucleotide exchange factor activity is repressed when bound to eIF2 complex phosphorylated on the alpha subunit, thereby limiting the amount of methionyl-initiator methionine tRNA available to the ribosome and consequently global translation is repressed. The protein is Translation initiation factor eIF2B subunit alpha of Caenorhabditis elegans.